The primary structure comprises 468 residues: Glutamate--tRNA ligase (468 aa).

The 'HIGH' region signature appears at 9–19 (PSPTGSIHIGN). A 'KMSKS' region motif is present at residues 239–243 (KLSKR). Lys242 lines the ATP pocket.

Belongs to the class-I aminoacyl-tRNA synthetase family. Glutamate--tRNA ligase type 1 subfamily. In terms of assembly, monomer.

The protein localises to the cytoplasm. It carries out the reaction tRNA(Glu) + L-glutamate + ATP = L-glutamyl-tRNA(Glu) + AMP + diphosphate. Functionally, catalyzes the attachment of glutamate to tRNA(Glu) in a two-step reaction: glutamate is first activated by ATP to form Glu-AMP and then transferred to the acceptor end of tRNA(Glu). The polypeptide is Glutamate--tRNA ligase (Blochmanniella pennsylvanica (strain BPEN)).